Here is a 598-residue protein sequence, read N- to C-terminus: Centrosomal protein of 70 kDa (598 aa).

Polar residues predominate over residues 16 to 38 (DSTKEPLSTVTSQAQDSSLSANR). The disordered stretch occupies residues 16–43 (DSTKEPLSTVTSQAQDSSLSANRPVTEK). 2 coiled-coil regions span residues 99–210 (TRQQ…EEDR) and 255–317 (TYKG…NIKL). A TPR repeat occupies 484-517 (NGVYPRMNEVYARLGEMNNAVRNLQELLGLDSSS).

In terms of assembly, directly interacts with tubulin-gamma; this interaction determines centrosomal localization.

The protein localises to the cytoplasm. It is found in the cytoskeleton. It localises to the microtubule organizing center. The protein resides in the centrosome. In terms of biological role, plays a role in the organization of both preexisting and nascent microtubules in interphase cells. During mitosis, required for the organization and orientation of the mitotic spindle. The polypeptide is Centrosomal protein of 70 kDa (Cep70) (Rattus norvegicus (Rat)).